Consider the following 249-residue polypeptide: 6-phosphogluconolactonase 3 (249 aa).

Belongs to the glucosamine/galactosamine-6-phosphate isomerase family. 6-phosphogluconolactonase subfamily.

It localises to the cytoplasm. The protein resides in the nucleus. It catalyses the reaction 6-phospho-D-glucono-1,5-lactone + H2O = 6-phospho-D-gluconate + H(+). The protein operates within carbohydrate degradation; pentose phosphate pathway; D-ribulose 5-phosphate from D-glucose 6-phosphate (oxidative stage): step 2/3. Hydrolysis of 6-phosphogluconolactone to 6-phosphogluconate. The protein is 6-phosphogluconolactonase 3 (SOL3) of Saccharomyces cerevisiae (strain RM11-1a) (Baker's yeast).